We begin with the raw amino-acid sequence, 88 residues long: MPNIKSAIKRVKIARERTLKNASARSALRTTLKRFEAALASADVDNARAALAKAVRALDKAAAKGLIHKNTASRKKSRITKRFNKAVV.

It belongs to the bacterial ribosomal protein bS20 family.

Functionally, binds directly to 16S ribosomal RNA. The sequence is that of Small ribosomal subunit protein bS20 from Heliobacterium modesticaldum (strain ATCC 51547 / Ice1).